Reading from the N-terminus, the 349-residue chain is Hydroxymethylglutaryl-CoA synthase (349 aa).

(3S)-3-hydroxy-3-methylglutaryl-CoA is bound by residues Asp30 and Ala31. Glu82 serves as the catalytic Proton donor/acceptor. (3S)-3-hydroxy-3-methylglutaryl-CoA is bound by residues Cys114 and Thr155. Cys114 (acyl-thioester intermediate) is an active-site residue. Arg203 serves as a coordination point for CoA. Thr205 and His238 together coordinate (3S)-3-hydroxy-3-methylglutaryl-CoA. The Proton donor/acceptor role is filled by His238. Lys243 contacts CoA. Residues Asn270 and Ser300 each contribute to the (3S)-3-hydroxy-3-methylglutaryl-CoA site.

It belongs to the thiolase-like superfamily. Archaeal HMG-CoA synthase family. As to quaternary structure, interacts with acetoacetyl-CoA thiolase that catalyzes the precedent step in the pathway and with a DUF35 protein. The acetoacetyl-CoA thiolase/HMG-CoA synthase complex channels the intermediate via a fused CoA-binding site, which allows for efficient coupling of the endergonic thiolase reaction with the exergonic HMGCS reaction.

The catalysed reaction is acetoacetyl-CoA + acetyl-CoA + H2O = (3S)-3-hydroxy-3-methylglutaryl-CoA + CoA + H(+). It functions in the pathway metabolic intermediate biosynthesis; (R)-mevalonate biosynthesis; (R)-mevalonate from acetyl-CoA: step 2/3. In terms of biological role, catalyzes the condensation of acetyl-CoA with acetoacetyl-CoA to form 3-hydroxy-3-methylglutaryl-CoA (HMG-CoA). Functions in the mevalonate (MVA) pathway leading to isopentenyl diphosphate (IPP), a key precursor for the biosynthesis of isoprenoid compounds that are building blocks of archaeal membrane lipids. This is Hydroxymethylglutaryl-CoA synthase from Methanococcus maripaludis (strain DSM 14266 / JCM 13030 / NBRC 101832 / S2 / LL).